Consider the following 299-residue polypeptide: Quinolinate synthase (299 aa).

His-21 and Ser-38 together coordinate iminosuccinate. Cys-83 contributes to the [4Fe-4S] cluster binding site. Residues 109-111 (YVN) and Ser-126 contribute to the iminosuccinate site. [4Fe-4S] cluster is bound at residue Cys-170. Residues 196-198 (HPE) and Thr-213 each bind iminosuccinate. Residue Cys-256 participates in [4Fe-4S] cluster binding.

The protein belongs to the quinolinate synthase family. Type 2 subfamily. It depends on [4Fe-4S] cluster as a cofactor.

It localises to the cytoplasm. It carries out the reaction iminosuccinate + dihydroxyacetone phosphate = quinolinate + phosphate + 2 H2O + H(+). Its pathway is cofactor biosynthesis; NAD(+) biosynthesis; quinolinate from iminoaspartate: step 1/1. Its function is as follows. Catalyzes the condensation of iminoaspartate with dihydroxyacetone phosphate to form quinolinate. In Pyrococcus abyssi (strain GE5 / Orsay), this protein is Quinolinate synthase.